Here is a 78-residue protein sequence, read N- to C-terminus: Acyl carrier protein (78 aa).

Residues 2–77 (SDIAERVKKI…DAIKFLEKNA (76 aa)) form the Carrier domain. Ser-37 carries the post-translational modification O-(pantetheine 4'-phosphoryl)serine.

It belongs to the acyl carrier protein (ACP) family. In terms of processing, 4'-phosphopantetheine is transferred from CoA to a specific serine of apo-ACP by AcpS. This modification is essential for activity because fatty acids are bound in thioester linkage to the sulfhydryl of the prosthetic group.

It localises to the cytoplasm. It participates in lipid metabolism; fatty acid biosynthesis. Functionally, carrier of the growing fatty acid chain in fatty acid biosynthesis. In Xanthobacter autotrophicus (strain ATCC BAA-1158 / Py2), this protein is Acyl carrier protein.